Consider the following 255-residue polypeptide: Small ribosomal subunit protein eS1 (255 aa).

Positions 1–18 are enriched in basic residues; the sequence is MAVGKNKRLSKGKKGLKK. The segment at 1–28 is disordered; it reads MAVGKNKRLSKGKKGLKKRTQDPFSRKD. Residue Ala2 is modified to N-acetylalanine; partial. Positions 19-28 are enriched in basic and acidic residues; sequence RTQDPFSRKD.

The protein belongs to the eukaryotic ribosomal protein eS1 family. Component of the small ribosomal subunit. Mature ribosomes consist of a small (40S) and a large (60S) subunit. The 40S subunit contains about 33 different proteins and 1 molecule of RNA (18S). The 60S subunit contains about 49 different proteins and 3 molecules of RNA (25S, 5.8S and 5S).

It localises to the cytoplasm. The sequence is that of Small ribosomal subunit protein eS1 from Ajellomyces capsulatus (strain G186AR / H82 / ATCC MYA-2454 / RMSCC 2432) (Darling's disease fungus).